We begin with the raw amino-acid sequence, 793 residues long: Signal transducer and activator of transcription 5A (793 aa).

Residue Tyr-90 is modified to Phosphotyrosine. Ser-128 carries the post-translational modification Phosphoserine. In terms of domain architecture, SH2 spans 589 to 686 (WNDGAILGFV…EVFAKYYTPV (98 aa)). Tyr-682 is modified (phosphotyrosine). At Tyr-694 the chain carries Phosphotyrosine; by JAK2. The disordered stretch occupies residues 772-793 (DSLDPRLSPPAGLFTSARSSLS). Position 779 is a phosphoserine (Ser-779).

This sequence belongs to the transcription factor STAT family. Forms a homodimer or a heterodimer with a related family member. Binds NR3C1. Interacts with NCOA1 and SOCS7. Interacts with ERBB4. Interacts with EBF4. Post-translationally, ISGylated. Tyrosine phosphorylated in response to KITLG/SCF, IL2, IL3, IL7, IL15, CSF2/GMCSF, GH1, PRL, EPO and THPO. Activated KIT promotes phosphorylation on tyrosine residues and subsequent translocation to the nucleus. Tyrosine phosphorylated in response to constitutively activated FGFR1, FGFR2, FGFR3 and FGFR4. Tyrosine phosphorylation is required for DNA-binding activity and dimerization. Serine phosphorylation is also required for maximal transcriptional activity. Tyrosine phosphorylated in response to signaling via activated FLT3; wild-type FLT3 results in much weaker phosphorylation than constitutively activated mutant FLT3. Alternatively, can be phosphorylated by JAK2 at Tyr-694. As to expression, expressed in heart, lung, and weakly in muscle.

The protein resides in the cytoplasm. It localises to the nucleus. Functionally, carries out a dual function: signal transduction and activation of transcription. Mediates cellular responses to the cytokine KITLG/SCF and other growth factors. May mediate cellular responses to activated FGFR1, FGFR2, FGFR3 and FGFR4. Binds to the GAS element and activates PRL-induced transcription. Regulates the expression of milk proteins during lactation. The sequence is that of Signal transducer and activator of transcription 5A (Stat5a) from Rattus norvegicus (Rat).